The primary structure comprises 163 residues: Urease accessory protein UreE (163 aa).

Belongs to the UreE family.

The protein localises to the cytoplasm. Involved in urease metallocenter assembly. Binds nickel. Probably functions as a nickel donor during metallocenter assembly. The polypeptide is Urease accessory protein UreE (Actinomyces naeslundii).